Here is a 463-residue protein sequence, read N- to C-terminus: MATSKLPVVPGEEENTILMAKERLEALRTAFESGDLPQAASHLQELLASTESIRLEVGVTGESGAGKSSLINALRGLEAEDPGAALTGVMETTMQPSPYPHPQFPDVTLWDLPGAGSPGCPADKYLKQVDFSRYDFFLLVSPRRCGAVETRLAAEILCQGKKFYFVRTKVDEDLAATRTQRPSGFREAAVLQEIRDHCAERLREAGVADPRIFLVSNLSPARYDFPTLVSTWEHDLPSHRRHAGLLSLPDISLEALQKKKAMLQEQVLKTALVLGVIQALPVPGLAAAYDDALLIHSLRGYHRSFGLDDDSLAKLAEQVGKQAGDLRSVIRSPLANEVSPETVLRLYSQSSDGAMRVARAFERGIPVFGTLVAGGISFGAVYTMLQGCLNEMAEDAQRVRIKALEDDEPQPEVSLEVASDNGVEKGGSGEGGGEEAPLSTCRKLGLLLKYILDSWKKHDSEEK.

In terms of domain architecture, IRG-type G spans 53–235; it reads IRLEVGVTGE…PTLVSTWEHD (183 aa). GTP contacts are provided by residues 62–69, 87–91, 169–171, and 216–218; these read ESGAGKSS, TGVME, KVD, and SNL. Phosphoserine is present on residues serine 247 and serine 304. Positions 404–437 are disordered; that stretch reads LEDDEPQPEVSLEVASDNGVEKGGSGEGGGEEAP.

Belongs to the TRAFAC class dynamin-like GTPase superfamily. IRG family. In terms of tissue distribution, abundantly expressed in semen (at protein level).

Its subcellular location is the cell projection. It localises to the cilium. The protein localises to the flagellum. It is found in the lipid droplet. It carries out the reaction GTP + H2O = GDP + phosphate + H(+). Functionally, required for sperm motility and therefore male fertility, via positive regulation of spermatozoa fibrous sheath formation. This chain is Interferon-inducible GTPase 5, found in Homo sapiens (Human).